A 323-amino-acid polypeptide reads, in one-letter code: Phospho-N-acetylmuramoyl-pentapeptide-transferase (323 aa).

Helical transmembrane passes span 3–23 (NILLPLLGGFIITAAFMPALI), 52–72 (MGGLLFIVAIAVMTLLTSWVL), 77–97 (MLPTTWILIFILVLYGALGMW), 121–141 (IVGALILFWVYTHEQLPMALH), 145–165 (IGNWHMSGWYAVFVILWLVGF), 175–195 (LDGLVSGLASIAFAAYGIVAW), 200–220 (INIAIFCFAVVGSLLGFLIFN), 226–248 (IFMGDTGSLALGGALAAVSILLH), and 301–321 (IDLTFWGIGLVTALSGVWVIL).

Belongs to the glycosyltransferase 4 family. MraY subfamily. It depends on Mg(2+) as a cofactor.

It is found in the cell membrane. The catalysed reaction is UDP-N-acetyl-alpha-D-muramoyl-L-alanyl-gamma-D-glutamyl-L-lysyl-D-alanyl-D-alanine + di-trans,octa-cis-undecaprenyl phosphate = Mur2Ac(oyl-L-Ala-gamma-D-Glu-L-Lys-D-Ala-D-Ala)-di-trans,octa-cis-undecaprenyl diphosphate + UMP. The protein operates within cell wall biogenesis; peptidoglycan biosynthesis. In terms of biological role, catalyzes the initial step of the lipid cycle reactions in the biosynthesis of the cell wall peptidoglycan: transfers peptidoglycan precursor phospho-MurNAc-pentapeptide from UDP-MurNAc-pentapeptide onto the lipid carrier undecaprenyl phosphate, yielding undecaprenyl-pyrophosphoryl-MurNAc-pentapeptide, known as lipid I. The sequence is that of Phospho-N-acetylmuramoyl-pentapeptide-transferase from Levilactobacillus brevis (strain ATCC 367 / BCRC 12310 / CIP 105137 / JCM 1170 / LMG 11437 / NCIMB 947 / NCTC 947) (Lactobacillus brevis).